The primary structure comprises 427 residues: MACARPLISVYSEKGESSGKNVTLPAVFKAPIRPDIVNFVHTNLRKNNRQPYAVSELAGHQTSAESWGTGRAVARIPRVRGGGTHRSGQGAFGNMCRGGRMFAPTKTWRRWHRRVNTTQKRYAICSALAASALPALVMSKGHRIEEVPELPLVVEDKVEGYKKTKEAVLLLKKLKARNDIKKVYASQRMRAGKGKMRNRRRIQRRGPCIIYNEDNGIIKAFRNIPGITLLNVSKLNILKLAPGGHVGRFCIWTESAFRKLDELYGTWRKAASLKSNYNLPMHKMINTDLSRILKSPEIQRALRAPRKKIHRRVLKKNPLKNLRIMLKLNPYAKTMRRNTILRQARNHKLRVDKAAAAAAALQAKSDEKAAVAGKKPVVGKKGKKAAVGVKKQKKPLVGKKAAATKKPAPEKKPAEKKPTTEEKKPAA.

An N-acetylalanine modification is found at Ala2. An N6-acetyllysine modification is found at Lys14. Arg97 carries the omega-N-methylarginine modification. Lys106 is modified (N6-acetyllysine). Lys239 is covalently cross-linked (Glycyl lysine isopeptide (Lys-Gly) (interchain with G-Cter in SUMO2)). The residue at position 259 (Lys259) is an N6-acetyllysine. The residue at position 266 (Thr266) is a Phosphothreonine. Residues Ser290 and Ser295 each carry the phosphoserine modification. Residue Arg300 is modified to Citrulline. Lys327 participates in a covalent cross-link: Glycyl lysine isopeptide (Lys-Gly) (interchain with G-Cter in SUMO2). Lys333 and Lys353 each carry N6-acetyllysine. Lys364 carries the post-translational modification N6-acetyllysine; alternate. Lys364 is covalently cross-linked (Glycyl lysine isopeptide (Lys-Gly) (interchain with G-Cter in SUMO1); alternate). At Ser365 the chain carries Phosphoserine. Positions 369-427 (AAVAGKKPVVGKKGKKAAVGVKKQKKPLVGKKAAATKKPAPEKKPAEKKPTTEEKKPAA) are disordered. A compositionally biased stretch (basic residues) spans 377 to 397 (VVGKKGKKAAVGVKKQKKPLV). Positions 407 to 427 (PAPEKKPAEKKPTTEEKKPAA) are enriched in basic and acidic residues.

The protein belongs to the universal ribosomal protein uL4 family. Component of the large ribosomal subunit. May bind IPO9 with low affinity. Interacts with RBM3. Post-translationally, citrullinated by PADI4.

The protein localises to the cytoplasm. Functionally, component of the large ribosomal subunit. The ribosome is a large ribonucleoprotein complex responsible for the synthesis of proteins in the cell. This is Large ribosomal subunit protein uL4 (RPL4) from Pongo abelii (Sumatran orangutan).